The chain runs to 474 residues: ATP synthase subunit beta (474 aa).

151–158 lines the ATP pocket; it reads GGAGVGKT.

The protein belongs to the ATPase alpha/beta chains family. In terms of assembly, F-type ATPases have 2 components, CF(1) - the catalytic core - and CF(0) - the membrane proton channel. CF(1) has five subunits: alpha(3), beta(3), gamma(1), delta(1), epsilon(1). CF(0) has four main subunits: a(1), b(1), b'(1) and c(9-12).

Its subcellular location is the cell inner membrane. It catalyses the reaction ATP + H2O + 4 H(+)(in) = ADP + phosphate + 5 H(+)(out). Produces ATP from ADP in the presence of a proton gradient across the membrane. The catalytic sites are hosted primarily by the beta subunits. The polypeptide is ATP synthase subunit beta (Jannaschia sp. (strain CCS1)).